The chain runs to 53 residues: Sec-independent protein translocase protein TatA (53 aa).

A helical transmembrane segment spans residues 1-21 (MGMSVSHLLIVLLIIFVLFGA).

It belongs to the TatA/E family. In terms of assembly, the Tat system comprises two distinct complexes: a TatABC complex, containing multiple copies of TatA, TatB and TatC subunits, and a separate TatA complex, containing only TatA subunits. Substrates initially bind to the TatABC complex, which probably triggers association of the separate TatA complex to form the active translocon.

It is found in the cell inner membrane. Its function is as follows. Part of the twin-arginine translocation (Tat) system that transports large folded proteins containing a characteristic twin-arginine motif in their signal peptide across membranes. TatA could form the protein-conducting channel of the Tat system. This chain is Sec-independent protein translocase protein TatA, found in Rickettsia massiliae (strain Mtu5).